We begin with the raw amino-acid sequence, 332 residues long: MSRILDNEIMGDEELVERTLRPQYLREYIGQDKVKDQLQIFIEAAKMRDEALDHVLLFGPPGLGKTTMAFVIANELGVNLKQTSGPVIEKAGDLVAILNELEPGDVLFIDEIHRLPMSVEEVLYSAMEDFYIDIMIGAGEGSRSVHLELPPFTLIGATTRAGMLSNPLRARFGITGHMEYYAHAGLTEIVERTADIFEMEITHEAASELALRSRGTPRIANRLLKRVRDFAQIMGNGVIDDIITDKALTMLDVDHEGLDYVDQKILRTMIEMYSGGPVGLGTLSVNIAEERETVEDMYEPYLIQKGFIMRTRSGRVATAKAYEHLGYEYSEK.

The interval 1-181 (MSRILDNEIM…FGITGHMEYY (181 aa)) is large ATPase domain (RuvB-L). ATP is bound by residues Leu-20, Arg-21, Gly-62, Lys-65, Thr-66, Thr-67, 128–130 (EDF), Arg-171, Tyr-181, and Arg-218. Thr-66 contacts Mg(2+). The small ATPAse domain (RuvB-S) stretch occupies residues 182–252 (AHAGLTEIVE…ITDKALTMLD (71 aa)). Residues 255–332 (HEGLDYVDQK…EHLGYEYSEK (78 aa)) form a head domain (RuvB-H) region. 4 residues coordinate DNA: Arg-291, Arg-310, Arg-312, and Arg-315.

This sequence belongs to the RuvB family. As to quaternary structure, homohexamer. Forms an RuvA(8)-RuvB(12)-Holliday junction (HJ) complex. HJ DNA is sandwiched between 2 RuvA tetramers; dsDNA enters through RuvA and exits via RuvB. An RuvB hexamer assembles on each DNA strand where it exits the tetramer. Each RuvB hexamer is contacted by two RuvA subunits (via domain III) on 2 adjacent RuvB subunits; this complex drives branch migration. In the full resolvosome a probable DNA-RuvA(4)-RuvB(12)-RuvC(2) complex forms which resolves the HJ.

The protein resides in the cytoplasm. It carries out the reaction ATP + H2O = ADP + phosphate + H(+). In terms of biological role, the RuvA-RuvB-RuvC complex processes Holliday junction (HJ) DNA during genetic recombination and DNA repair, while the RuvA-RuvB complex plays an important role in the rescue of blocked DNA replication forks via replication fork reversal (RFR). RuvA specifically binds to HJ cruciform DNA, conferring on it an open structure. The RuvB hexamer acts as an ATP-dependent pump, pulling dsDNA into and through the RuvAB complex. RuvB forms 2 homohexamers on either side of HJ DNA bound by 1 or 2 RuvA tetramers; 4 subunits per hexamer contact DNA at a time. Coordinated motions by a converter formed by DNA-disengaged RuvB subunits stimulates ATP hydrolysis and nucleotide exchange. Immobilization of the converter enables RuvB to convert the ATP-contained energy into a lever motion, pulling 2 nucleotides of DNA out of the RuvA tetramer per ATP hydrolyzed, thus driving DNA branch migration. The RuvB motors rotate together with the DNA substrate, which together with the progressing nucleotide cycle form the mechanistic basis for DNA recombination by continuous HJ branch migration. Branch migration allows RuvC to scan DNA until it finds its consensus sequence, where it cleaves and resolves cruciform DNA. This is Holliday junction branch migration complex subunit RuvB from Streptococcus pneumoniae (strain JJA).